The primary structure comprises 944 residues: MESLKMSNIYLDELEGYSQKNIEDSIDSLIEPNQKPIHLCPFRILKGFIKITNTGEQSLLVNDKDFSTVWNIKASNEPIIAYWDKSFTYNFKGSLNYISKDYARIDPSNTTLKNNFKPYYFQAWVQNYSQANNVSTIVFNDKEHTVIKTITTVTLIVKYPSVYEDEIYQNEQGNLVSHKAKFKQWTTDMLKEYLFIIPDEHAQANQWLMVNEVIPFYSTTSKRYEGAQITLTNVNDLLTSSGNDILATIQPCQPGDGYLWPVIQNGKLTYDERKEKPLGVKSIQLLTNGPYALNSMLITGRTYNNDTRELSANKRLLLYKAKIPVASKFFNVSAPTSNYVYLYNAFFEIEKIYKDQYEKQKDFTFDHNANIKLNGGLLLNHKWDASNNALSYEDNRYPFKLWDEGFKIHASFFNFKLGGTGAQKGGSLTENAEQKKPLADAVVTGQVAGEVVSTVFESIGRNVSQGFNLNNLGLWSFNMGFAKTKAEQIKEATKIGLNNITMPPGTNLHTFLNHNAFMYDLIKYLPYSYKETIRQNLGELIDNTPLSLGKVRRGIVDILYPGWTKVEDATGYNMSNIWLNTRGFNFIAPCLPLELEVSNKLKADLINLDIFTNKPAKTFSPLGIPAIACCYHFDITDRFAKFVDDELKVFDTELIGQTTYRDGTYIRKDKKPLYWDSFCEALPPNTPLSYEPAVINIASGKREDVNRVKYPYVIDTIDIKGLGKCDIKLTAFSGFYSPDARLKDEFKNVYEAIFESNGKYTDDMSQWSNYINFSTLDEINSVGTKLSYPKPPVETDFLKNTKTNSDDGVNASLQTINETLYKVGDNSLLSATQYRKPRFYFYEPDSSKLANLFGYGSYTNKLNYLFGGSNLSDVIVANKVIAYSFVFKWDFNYREWLNLGSVNKTKRNLKLTFEIESNWIQKGWTNQFNVDNSFNQLITLLVLN.

This is an uncharacterized protein from Ureaplasma parvum serovar 3 (strain ATCC 700970).